The following is a 502-amino-acid chain: Cardiolipin synthase (502 aa).

3 helical membrane passes run 7–27, 29–49, and 59–79; these read VAIL…YWGG, LLGI…FVIS, and IAWL…YLLF. 2 PLD phosphodiesterase domains span residues 237–264 and 415–442; these read INFR…GDEY and EKGF…DMRS. Catalysis depends on residues His-242, Lys-244, Asp-249, His-420, Lys-422, and Asp-427.

It belongs to the phospholipase D family. Cardiolipin synthase subfamily.

It localises to the cell membrane. The enzyme catalyses 2 a 1,2-diacyl-sn-glycero-3-phospho-(1'-sn-glycerol) = a cardiolipin + glycerol. In terms of biological role, catalyzes the reversible phosphatidyl group transfer from one phosphatidylglycerol molecule to another to form cardiolipin (CL) (diphosphatidylglycerol) and glycerol. This is Cardiolipin synthase (cls) from Geobacillus thermodenitrificans (strain NG80-2).